A 623-amino-acid chain; its full sequence is MGQGSSHDAPHLTPEQLSHTLAQRFASKSYTPLELYCFSTVFRSLADTSSGVRYWSEPTLCRFLELPDALGVGSVLFQMCSYLGAFPLPSQAPAILTQEALLKVVTILTERYGSVIKRRGRELWLRELYRGLAVYDRGVSASIEEEHEREAQPVATEGESSGMGFAIDAPEDGEGDEDEDDELVLAALDSMDAVEVFKQGEQANVHHSIIPTDNFLKLVELLLLIAPIDAQQSLSSLAPELSDERVEELRRVAHVIVSAFGVENHPGVTYRTFNTVISAALPYLFNGLNPLFEHFLFAKDFDLSKRKNDPSSPSQDTHPVIPPPKTVMDPEPLLPQPGEILNLTLLSQLSFFLKGNTLFRRLRPLYSGNNHGFSMGSFEKQVFNWRAPTILLVKGRVLPATPSNTRERALQDMLPPKRLPNSVPESQENQTLIYGAYIPTQWKHTGKTCFGDESTVLFQLSPTHDVFKASKFSTDYVYFNKSPTQPPGIGLGTPIPTQSSAHTHSSHSQTLFRPGPVSLHLDDALEFGIFTHVSDGGGSFHPSALPVRKRRDWQDRFEIESLEVWGCGGDEVAEAQRKEWAWQEREAEARRRINLGTGDQELDRELLKMAGIISGDRSGGSMG.

Disordered stretches follow at residues glutamate 144–glutamate 179 and lysine 307–methionine 328. Over residues alanine 169–glutamate 179 the composition is skewed to acidic residues. Residues glutamate 339–glycine 568 enclose the TLDc domain.

This sequence belongs to the RTC5 family.

It is found in the cytoplasm. In terms of biological role, may be involved in a process influencing telomere capping. This chain is Restriction of telomere capping protein 5 (RTC5), found in Leptosphaeria maculans (strain JN3 / isolate v23.1.3 / race Av1-4-5-6-7-8) (Blackleg fungus).